Consider the following 103-residue polypeptide: Large ribosomal subunit protein bL21 (103 aa).

The protein belongs to the bacterial ribosomal protein bL21 family. In terms of assembly, part of the 50S ribosomal subunit. Contacts protein L20.

This protein binds to 23S rRNA in the presence of protein L20. This chain is Large ribosomal subunit protein bL21, found in Aliivibrio salmonicida (strain LFI1238) (Vibrio salmonicida (strain LFI1238)).